Reading from the N-terminus, the 141-residue chain is Small ribosomal subunit protein bS16 (141 aa).

Composition is skewed to polar residues over residues 89–101 and 109–129; these read NVSV…TEAI and ATAN…TATI. The interval 89–141 is disordered; the sequence is NVSVSHAESTEAITNAEPIQATANTESNEVSDSESTATATIRESEEQPPISES.

Belongs to the bacterial ribosomal protein bS16 family.

This is Small ribosomal subunit protein bS16 from Trichodesmium erythraeum (strain IMS101).